A 260-amino-acid polypeptide reads, in one-letter code: Global transcriptional regulator CodY (260 aa).

The GAF domain stretch occupies residues 1–159; the sequence is MPNLLQKTRK…SSTVVGIQLL (159 aa). The H-T-H motif DNA-binding region spans 207–226; sequence ASVIADRIGITRSVIVNALR.

This sequence belongs to the CodY family.

It is found in the cytoplasm. DNA-binding global transcriptional regulator which is involved in the adaptive response to starvation and acts by directly or indirectly controlling the expression of numerous genes in response to nutrient availability. During rapid exponential growth, CodY is highly active and represses genes whose products allow adaptation to nutrient depletion. This is Global transcriptional regulator CodY from Streptococcus equi subsp. zooepidemicus (strain MGCS10565).